The chain runs to 258 residues: Imidazole glycerol phosphate synthase subunit HisF (258 aa).

Catalysis depends on residues aspartate 12 and aspartate 131.

This sequence belongs to the HisA/HisF family. As to quaternary structure, heterodimer of HisH and HisF.

The protein resides in the cytoplasm. The catalysed reaction is 5-[(5-phospho-1-deoxy-D-ribulos-1-ylimino)methylamino]-1-(5-phospho-beta-D-ribosyl)imidazole-4-carboxamide + L-glutamine = D-erythro-1-(imidazol-4-yl)glycerol 3-phosphate + 5-amino-1-(5-phospho-beta-D-ribosyl)imidazole-4-carboxamide + L-glutamate + H(+). The protein operates within amino-acid biosynthesis; L-histidine biosynthesis; L-histidine from 5-phospho-alpha-D-ribose 1-diphosphate: step 5/9. Functionally, IGPS catalyzes the conversion of PRFAR and glutamine to IGP, AICAR and glutamate. The HisF subunit catalyzes the cyclization activity that produces IGP and AICAR from PRFAR using the ammonia provided by the HisH subunit. The protein is Imidazole glycerol phosphate synthase subunit HisF of Arthrobacter sp. (strain FB24).